The chain runs to 90 residues: Photosystem I reaction center subunit PsaK 2 (90 aa).

The next 2 membrane-spanning stretches (helical) occupy residues 20-42 (LSVG…FAIQ) and 67-89 (LATM…SSGI).

The protein belongs to the PsaG/PsaK family.

It localises to the cellular thylakoid membrane. The chain is Photosystem I reaction center subunit PsaK 2 (psaK2) from Synechocystis sp. (strain ATCC 27184 / PCC 6803 / Kazusa).